Reading from the N-terminus, the 201-residue chain is Recombination protein RecR (201 aa).

The C4-type zinc finger occupies 60–75 (CKTCGNIDTQNPCTVC). The Toprim domain occupies 83–178 (AIIVVVADVA…KVTRLAHGVP (96 aa)).

This sequence belongs to the RecR family.

Its function is as follows. May play a role in DNA repair. It seems to be involved in an RecBC-independent recombinational process of DNA repair. It may act with RecF and RecO. The polypeptide is Recombination protein RecR (Rhodopseudomonas palustris (strain BisA53)).